A 262-amino-acid polypeptide reads, in one-letter code: Hemin import ATP-binding protein HmuV (262 aa).

The 238-residue stretch at 5–242 (LEARKAGFAT…ELIGAVFDVE (238 aa)) folds into the ABC transporter domain. 37–44 (GPNGAGKS) provides a ligand contact to ATP.

It belongs to the ABC transporter superfamily. Heme (hemin) importer (TC 3.A.1.14.5) family. In terms of assembly, the complex is composed of two ATP-binding proteins (HmuV), two transmembrane proteins (HmuU) and a solute-binding protein (HmuT).

The protein resides in the cell inner membrane. In terms of biological role, part of the ABC transporter complex HmuTUV involved in hemin import. Responsible for energy coupling to the transport system. This is Hemin import ATP-binding protein HmuV from Rhodopseudomonas palustris (strain HaA2).